The sequence spans 329 residues: IDS-like terpene synthase 1 (329 aa).

Asp79 and Asp83 together coordinate Mg(2+).

The protein belongs to the FPP/GGPP synthase family. Mg(2+) serves as cofactor.

The enzyme catalyses (2E)-geranyl diphosphate + H2O = linalool + diphosphate. It carries out the reaction (2E,6E)-farnesyl diphosphate + H2O = (6E)-nerolidol + diphosphate. Terpene synthase that shows monoterpene synthase activity and produces linalool, using geranyl diphosphate (GPP) as substrate. Also shows sesquiterpene synthase activity as it is able to convert farnesyl diphosphate (FPP) into (E)-nerolidol. The protein is IDS-like terpene synthase 1 of Melampsora lini (Rust fungus).